The chain runs to 39 residues: SGSKTAKIGDGCFGLPLDRIGSTSGMGCGSVPKPTPGGS.

A propeptide spanning residues 1 to 8 (SGSKTAKI) is cleaved from the precursor. A disulfide bridge links cysteine 12 with cysteine 28. The tract at residues 19-39 (RIGSTSGMGCGSVPKPTPGGS) is disordered.

It belongs to the natriuretic peptide family. In terms of tissue distribution, expressed by the venom gland.

Its subcellular location is the secreted. In terms of biological role, snake venom natriuretic peptide that targets both NPR1 and NPR2. Exhibits hypotensive and vasodepressor activities. The sequence is that of Natriuretic peptide NsNP-b from Notechis scutatus scutatus (Mainland tiger snake).